The following is a 741-amino-acid chain: Lamin-B receptor (741 aa).

The segment at 29-126 (RLRRPRRTED…TGSGSGSSLP (98 aa)) is disordered. Low complexity-rich tracts occupy residues 57–84 (TRRTGSVTAAGATATATATAGPATRTRA) and 109–126 (PRSSVGPLTGSGSGSSLP). Ser111 carries the phosphoserine modification. At Thr135 the chain carries Phosphothreonine. Ser144 bears the Phosphoserine mark. Over residues 160–184 (TNTSSGAPNKAFNTSSVNSGNSFSR) the composition is skewed to polar residues. The interval 160-194 (TNTSSGAPNKAFNTSSVNSGNSFSRTTTSSTTTTT) is disordered. Positions 185–194 (TTTSSTTTTT) are enriched in low complexity. Residues Ser223 and Ser225 each carry the phosphoserine modification. The segment covering 231 to 240 (LAGTPVTNTE) has biased composition (polar residues). The interval 231–277 (LAGTPVTNTEEGSRYSRSVSRSVYDDEKSSKRSYSTGEEDIDEEDEL) is disordered. Phosphothreonine occurs at positions 234 and 237. Phosphoserine is present on residues Ser243, Ser246, Ser248, Ser250, and Ser263. Thr266 carries the post-translational modification Phosphothreonine. Residues 267-277 (GEEDIDEEDEL) are compositionally biased toward acidic residues. At Ser284 the chain carries Phosphoserine. Thr288 is subject to Phosphothreonine. Ser291 is modified (phosphoserine). Thr293 carries the phosphothreonine modification. Phosphoserine is present on Ser298. The next 8 membrane-spanning stretches (helical) occupy residues 308 to 328 (FGGWLGAFLFLLLLPTAVYYL), 363 to 383 (VVGAFAAYQVVVFLLVALLPG), 402 to 422 (LTLLIASGVAEYLKYPVVTFV), 429 to 449 (FCIFGLVGAFVAAAWSYWLVD), 497 to 517 (LSLVTTLIYATCYIYQTLVWP), 543 to 563 (PATLFSASCLLFYVLDAIIFE), 577 to 599 (YGCLLLLRYAATPYLLTAVTKYF), and 604 to 624 (VPISCWYAPLAVAALLSLGLL). A phosphoserine mark is found at Ser640 and Ser642. The chain crosses the membrane as a helical span at residues 687–707 (MALRPAWPPVLGLSLIILLLL).

Belongs to the ERG4/ERG24 family. In terms of assembly, interacts directly with LAM.

The protein resides in the nucleus inner membrane. In terms of biological role, anchors the lamina and the heterochromatin to the inner nuclear membrane. This Drosophila melanogaster (Fruit fly) protein is Lamin-B receptor.